A 436-amino-acid chain; its full sequence is 23S rRNA (uracil(1939)-C(5))-methyltransferase RlmD (436 aa).

In terms of domain architecture, TRAM spans 10–68 (KQKTTQKIVAEIQDLDYQGLGVAKIQGKTWFIENALPTEKVEAVVTDEKRQYGLATAQK). 4 residues coordinate [4Fe-4S] cluster: Cys81, Cys87, Cys90, and Cys168. S-adenosyl-L-methionine contacts are provided by Gln270, Phe299, Asn304, Glu320, Asp347, and Asp368. The active-site Nucleophile is the Cys394.

The protein belongs to the class I-like SAM-binding methyltransferase superfamily. RNA M5U methyltransferase family. RlmD subfamily.

It catalyses the reaction uridine(1939) in 23S rRNA + S-adenosyl-L-methionine = 5-methyluridine(1939) in 23S rRNA + S-adenosyl-L-homocysteine + H(+). Functionally, catalyzes the formation of 5-methyl-uridine at position 1939 (m5U1939) in 23S rRNA. The sequence is that of 23S rRNA (uracil(1939)-C(5))-methyltransferase RlmD from Haemophilus parainfluenzae (strain T3T1).